The sequence spans 307 residues: Glutaminase (307 aa).

Positions 66, 117, 161, 168, 192, 243, and 261 each coordinate substrate.

Belongs to the glutaminase family. In terms of assembly, homotetramer.

It carries out the reaction L-glutamine + H2O = L-glutamate + NH4(+). The sequence is that of Glutaminase from Serratia proteamaculans (strain 568).